Reading from the N-terminus, the 69-residue chain is DNA gyrase inhibitor YacG (69 aa).

Residues cysteine 13, cysteine 16, cysteine 32, and cysteine 36 each coordinate Zn(2+).

This sequence belongs to the DNA gyrase inhibitor YacG family. As to quaternary structure, interacts with GyrB. Zn(2+) serves as cofactor.

Its function is as follows. Inhibits all the catalytic activities of DNA gyrase by preventing its interaction with DNA. Acts by binding directly to the C-terminal domain of GyrB, which probably disrupts DNA binding by the gyrase. This chain is DNA gyrase inhibitor YacG, found in Neisseria meningitidis serogroup C / serotype 2a (strain ATCC 700532 / DSM 15464 / FAM18).